Reading from the N-terminus, the 522-residue chain is Ribonuclease Y (522 aa).

A helical transmembrane segment spans residues 7 to 27 (STILYCLFFFFLGIAAVLAFI). Residues 212 to 272 (TTSTVGVPTD…VRREVARMSL (61 aa)) enclose the KH domain. The region spanning 338–431 (VLRHSVEVAF…VATADACSAS (94 aa)) is the HD domain.

Belongs to the RNase Y family.

It is found in the cell membrane. Functionally, endoribonuclease that initiates mRNA decay. The polypeptide is Ribonuclease Y (Rhodopirellula baltica (strain DSM 10527 / NCIMB 13988 / SH1)).